The chain runs to 334 residues: Cyclin N-terminal domain-containing protein 1 (334 aa).

Positions 29–180 constitute a Cyclin N-terminal domain; it reads NALLHLAQQN…ILKSLNFQIN (152 aa).

As to quaternary structure, interacts with PRR19; this interaction promotes crossover formation. Interacts with RFC3 and RFC4; these interactions facilitate crossover formation. Interacts with CDC34; this interaction regulates the cell-cycle progression. Isoform 2 is expressed in spermatocyte.

Its subcellular location is the nucleus. The protein localises to the cytoplasm. It localises to the chromosome. In terms of biological role, plays a role in the different steps of crossover formation during meiotic recombination. Participates in the crossover differentiation step of crossover-specific recombination intermediates through its interaction with PRR19. In addition, stimulates crossover formation through the interactions with RFC3 and RFC4 and simultaneously regulates cell-cycle progression through interactions with CDC34 and subsequent ubiquitination of WEE1. May also participates in an active deselection process that destabilizes or removes excess pre-CO intermediates. The sequence is that of Cyclin N-terminal domain-containing protein 1 from Mus musculus (Mouse).